The chain runs to 148 residues: Arginine repressor (148 aa).

This sequence belongs to the ArgR family.

The protein localises to the cytoplasm. It functions in the pathway amino-acid biosynthesis; L-arginine biosynthesis [regulation]. Regulates arginine biosynthesis genes. This is Arginine repressor from Prosthecochloris aestuarii (strain DSM 271 / SK 413).